The following is a 176-amino-acid chain: Inner membrane-spanning protein YciB (176 aa).

The next 6 membrane-spanning stretches (helical) occupy residues 3-23 (FLFD…WGIF), 24-44 (TATA…AFRH), 49-69 (TMLW…LVLH), 81-101 (LYWL…NNLI), 121-141 (VAWA…VHNF), and 149-169 (FKLF…SLWL).

It belongs to the YciB family.

The protein localises to the cell inner membrane. Plays a role in cell envelope biogenesis, maintenance of cell envelope integrity and membrane homeostasis. This chain is Inner membrane-spanning protein YciB, found in Burkholderia vietnamiensis (strain G4 / LMG 22486) (Burkholderia cepacia (strain R1808)).